A 78-amino-acid polypeptide reads, in one-letter code: MKFMLNATGLPLQDLVFGASVYFPPFFKAFAFGFVIWLVVHRLLRGWIYAGDIWHPLLMDLSLFAICVCLALAILIAW.

A run of 2 helical transmembrane segments spans residues 20-40 (SVYFPPFFKAFAFGFVIWLVV) and 57-77 (LLMDLSLFAICVCLALAILIA).

The protein localises to the cell membrane. This is an uncharacterized protein from Escherichia coli (strain K12).